Reading from the N-terminus, the 236-residue chain is 2-phospho-L-lactate guanylyltransferase (236 aa).

Belongs to the CofC family. Homodimer.

The enzyme catalyses (2S)-2-phospholactate + GTP + H(+) = (2S)-lactyl-2-diphospho-5'-guanosine + diphosphate. It participates in cofactor biosynthesis; coenzyme F420 biosynthesis. In terms of biological role, guanylyltransferase that catalyzes the activation of (2S)-2-phospholactate (2-PL) as (2S)-lactyl-2-diphospho-5'-guanosine, via the condensation of 2-PL with GTP. It is involved in the biosynthesis of coenzyme F420, a hydride carrier cofactor. This is 2-phospho-L-lactate guanylyltransferase from Natrialba magadii (strain ATCC 43099 / DSM 3394 / CCM 3739 / CIP 104546 / IAM 13178 / JCM 8861 / NBRC 102185 / NCIMB 2190 / MS3) (Natronobacterium magadii).